Reading from the N-terminus, the 88-residue chain is Small ribosomal subunit protein uS19 (88 aa).

The protein belongs to the universal ribosomal protein uS19 family.

Functionally, protein S19 forms a complex with S13 that binds strongly to the 16S ribosomal RNA. This chain is Small ribosomal subunit protein uS19, found in Chlamydia abortus (strain DSM 27085 / S26/3) (Chlamydophila abortus).